The chain runs to 263 residues: Superoxide dismutase [Fe] 3, chloroplastic (263 aa).

A chloroplast-targeting transit peptide spans 1 to 41 (MSSCVVTTSCFYTISDSSIRLKSPKLLNLSNQQRRRSLRSR). Fe cation-binding residues include H74, H127, D211, and H215.

This sequence belongs to the iron/manganese superoxide dismutase family. In terms of assembly, homodimer. Heterodimer with FSD2. Interacts with MRL7. The cofactor is Fe cation.

The protein resides in the plastid. Its subcellular location is the chloroplast thylakoid. The catalysed reaction is 2 superoxide + 2 H(+) = H2O2 + O2. Its activity is regulated as follows. Activated by cpn20/cpn21 (in vitro). In terms of biological role, destroys superoxide anion radicals which are normally produced within the cells and which are toxic to biological systems. Plays important role in chloroplast development, particularly in the maintenance of thylakoids membranes. Seems to act as a heterodimer with FSD2. This chain is Superoxide dismutase [Fe] 3, chloroplastic, found in Arabidopsis thaliana (Mouse-ear cress).